Reading from the N-terminus, the 1274-residue chain is DENN domain-containing protein 5B (1274 aa).

Ser2 is subject to N-acetylserine. Positions 39–244 (DELAGENFDQ…EVPLPPPGRS (206 aa)) constitute a uDENN domain. Phosphoserine occurs at positions 49 and 178. Positions 263-399 (ELPLSDYPLR…VDFIQELSEV (137 aa)) constitute a cDENN domain. One can recognise a dDENN domain in the interval 401–581 (VQFGIPPEGS…DNKIMSQWEE (181 aa)). The RUN 1 domain occupies 772 to 932 (LEENTLIASL…DYFCFTSVFT (161 aa)). Ser822 carries the post-translational modification Phosphoserine. The helical transmembrane segment at 916 to 936 (LLSLNAVDYFCFTSVFTTIMI) threads the bilayer. The PLAT domain occupies 936–1044 (IPYRSVIIPI…DDGSLERILI (109 aa)). A Phosphothreonine modification is found at Thr1062. Ser1068, Ser1076, and Ser1079 each carry phosphoserine. The RUN 2 domain maps to 1118–1267 (TVLLCGENGL…QDFTIVLEGS (150 aa)).

This sequence belongs to the RAB6IP1 family.

The protein resides in the membrane. Guanine nucleotide exchange factor (GEF) which may activate RAB39A and/or RAB39B. Promotes the exchange of GDP to GTP, converting inactive GDP-bound Rab proteins into their active GTP-bound form. The polypeptide is DENN domain-containing protein 5B (DENND5B) (Homo sapiens (Human)).